Consider the following 1074-residue polypeptide: Zinc finger protein 518B (1074 aa).

A compositionally biased stretch (polar residues) spans His12–Pro24. The segment at His12–Asn36 is disordered. 2 consecutive C2H2-type zinc fingers follow at residues Phe162–His184 and Tyr190–His213. Glycyl lysine isopeptide (Lys-Gly) (interchain with G-Cter in SUMO2) cross-links involve residues Lys482, Lys491, and Lys558. Residues Ser568–Ser590 are disordered. The span at Arg570–Ala582 shows a compositional bias: basic and acidic residues. Lys594 participates in a covalent cross-link: Glycyl lysine isopeptide (Lys-Gly) (interchain with G-Cter in SUMO2). Disordered stretches follow at residues Thr603–Val632 and Lys678–Ser704. Positions Gly604 to Glu622 are enriched in basic and acidic residues. Residues Gly693–Ser704 show a composition bias toward polar residues. Residues Lys809, Lys846, and Lys860 each participate in a glycyl lysine isopeptide (Lys-Gly) (interchain with G-Cter in SUMO2) cross-link. The C2H2-type 3 zinc-finger motif lies at Phe1036–His1058.

Belongs to the krueppel C2H2-type zinc-finger protein family.

It is found in the nucleus. Functionally, through its association with the EHMT1-EHMT2/G9A and PRC2/EED-EZH2 histone methyltransferase complexes may function in gene silencing, regulating repressive post-translational methylation of histone tails at promoters of target genes. In Homo sapiens (Human), this protein is Zinc finger protein 518B (ZNF518B).